Reading from the N-terminus, the 592-residue chain is A-type ATP synthase subunit A (592 aa).

234 to 241 (GPFGSGKT) contacts ATP.

Belongs to the ATPase alpha/beta chains family. Has multiple subunits with at least A(3), B(3), C, D, E, F, H, I and proteolipid K(x).

Its subcellular location is the cell membrane. It catalyses the reaction ATP + H2O + 4 H(+)(in) = ADP + phosphate + 5 H(+)(out). Produces ATP from ADP in the presence of a proton gradient across the membrane. The archaeal alpha chain is a catalytic subunit. In terms of biological role, component of the A-type ATP synthase that produces ATP from ADP in the presence of a proton gradient across the membrane. The A chain is the catalytic subunit. This Sulfolobus acidocaldarius (strain ATCC 33909 / DSM 639 / JCM 8929 / NBRC 15157 / NCIMB 11770) protein is A-type ATP synthase subunit A.